The chain runs to 300 residues: Bifunctional protein FolD 2 (300 aa).

NADP(+) is bound by residues 166–168, Ser-191, and Ile-232; that span reads GRS.

This sequence belongs to the tetrahydrofolate dehydrogenase/cyclohydrolase family. In terms of assembly, homodimer.

The enzyme catalyses (6R)-5,10-methylene-5,6,7,8-tetrahydrofolate + NADP(+) = (6R)-5,10-methenyltetrahydrofolate + NADPH. The catalysed reaction is (6R)-5,10-methenyltetrahydrofolate + H2O = (6R)-10-formyltetrahydrofolate + H(+). Its pathway is one-carbon metabolism; tetrahydrofolate interconversion. Catalyzes the oxidation of 5,10-methylenetetrahydrofolate to 5,10-methenyltetrahydrofolate and then the hydrolysis of 5,10-methenyltetrahydrofolate to 10-formyltetrahydrofolate. The polypeptide is Bifunctional protein FolD 2 (Roseobacter denitrificans (strain ATCC 33942 / OCh 114) (Erythrobacter sp. (strain OCh 114))).